A 152-amino-acid polypeptide reads, in one-letter code: Large-conductance mechanosensitive channel (152 aa).

Transmembrane regions (helical) follow at residues 14–34 (VIDL…VTSL) and 81–101 (GLFL…FIAI).

This sequence belongs to the MscL family. Homopentamer.

It is found in the cell membrane. Its function is as follows. Channel that opens in response to stretch forces in the membrane lipid bilayer. May participate in the regulation of osmotic pressure changes within the cell. In Clostridium perfringens (strain 13 / Type A), this protein is Large-conductance mechanosensitive channel.